The primary structure comprises 430 residues: GTPase Obg (430 aa).

In terms of domain architecture, Obg spans 1–158 (MFVDQVKISL…LDVSLELKLL (158 aa)). The interval 118–145 (KGGRGGRGNSRFATPRNPAPDFSEKGEP) is disordered. An OBG-type G domain is found at 159–329 (ADVGLVGFPS…LLYAIADKLE (171 aa)). GTP-binding positions include 165 to 172 (GFPSVGKS), 190 to 194 (FTTIK), 212 to 215 (DLPG), 282 to 285 (NKMD), and 310 to 312 (STI). Positions 172 and 192 each coordinate Mg(2+). The region spanning 352 to 430 (KHTPSQDKFT…ILGGEFEFVE (79 aa)) is the OCT domain.

This sequence belongs to the TRAFAC class OBG-HflX-like GTPase superfamily. OBG GTPase family. In terms of assembly, monomer. Mg(2+) is required as a cofactor.

The protein resides in the cytoplasm. Functionally, an essential GTPase which binds GTP, GDP and possibly (p)ppGpp with moderate affinity, with high nucleotide exchange rates and a fairly low GTP hydrolysis rate. Plays a role in control of the cell cycle, stress response, ribosome biogenesis and in those bacteria that undergo differentiation, in morphogenesis control. This Staphylococcus aureus (strain COL) protein is GTPase Obg.